The sequence spans 1792 residues: Non-reducing polyketide synthase aptA (1792 aa).

Positions Met1–Ala395 are N-terminal acylcarrier protein transacylase domain (SAT). The region spanning His391–Asp824 is the Ketosynthase family 3 (KS3) domain. Active-site for beta-ketoacyl synthase activity residues include Cys564, His699, and His742. Positions Val926–Cys1243 are malonyl-CoA:ACP transacylase (MAT) domain. The tract at residues Thr1308 to Ser1625 is product template (PT) domain. The interval His1312–Glu1447 is N-terminal hotdog fold. One can recognise a PKS/mFAS DH domain in the interval His1312–Asp1621. The active-site Proton acceptor; for dehydratase activity is His1344. The segment at Gln1475–Asp1621 is C-terminal hotdog fold. Asp1533 serves as the catalytic Proton donor; for dehydratase activity. The segment covering Val1634–Ala1649 has biased composition (low complexity). The tract at residues Val1634–Glu1716 is disordered. The span at Thr1664–Pro1684 shows a compositional bias: polar residues. Basic and acidic residues predominate over residues Thr1694 to Ala1705. In terms of domain architecture, Carrier spans Pro1715–Cys1792. O-(pantetheine 4'-phosphoryl)serine is present on Ser1752.

Pantetheine 4'-phosphate is required as a cofactor.

The enzyme catalyses holo-[ACP] + 8 malonyl-CoA + acetyl-CoA + 8 H(+) = 3,6,8,9-tetrahydroxy-1-oxo-3-(2-oxopropyl)-1,2,3,4-tetrahydroanthracene-2-carboxyl-[ACP] + 8 CO2 + 9 CoA + 2 H2O. The protein operates within secondary metabolite biosynthesis. Its function is as follows. Non-reducing polyketide synthase (NRPKS); part of the gene cluster that mediates the biosynthesis of asperthecin, an anthraquinone pigment. Catalyzes the formation of the aromatic polyketide from acetyl coenzyme A and seven malonyl coenzyme A molecules. Through its product template (PT) domain, catalyzes the cyclization of the polyketide backbone via C6-C11 aldolcondensation. Polyketide is subsequently hydrolyzed from the NRPKS by the action of the hydrolase aptB into endocrocin-9-anthrone. Endocrocin-9-anthrone is then oxidized into endocrocin by aptC. Endocrocin is likely to decarboxylate spontaneously to form emodin which explains why there is no decarboxylase in the asperthecin biosynthesis cluster. Finally, aptC or another endogenous oxygenase catalyzes additional oxidation steps to form asperthecin. The sequence is that of Non-reducing polyketide synthase aptA from Emericella nidulans (strain FGSC A4 / ATCC 38163 / CBS 112.46 / NRRL 194 / M139) (Aspergillus nidulans).